A 560-amino-acid polypeptide reads, in one-letter code: Mitochondria-eating protein (560 aa).

Residues 1–294 (MADNLRKLVS…SHSRNHSRSR (294 aa)) form an interaction with YWHAG/14-3-3 protein gamma region. 4 positions are modified to phosphoserine: serine 13, serine 85, serine 156, and serine 159. Coiled-coil stretches lie at residues 118-186 (DRNI…SRHR) and 223-248 (DYEK…LQGR). 2 disordered regions span residues 178–217 (QAQE…AQRK) and 243–316 (SVLQ…AKLS). The segment covering 181-209 (EESRHRPPEHRSSEKRGSERRRVEPRGAD) has biased composition (basic and acidic residues). Low complexity predominate over residues 248–262 (RSTRSRSPSPASCSR). The span at 263–293 (SRSHSHSRSRSHSHSRSGSHSRSHSRNHSRS) shows a compositional bias: basic residues. Positions 300 to 310 (TAVSGVRSPSP) are enriched in polar residues. 3 positions are modified to phosphoserine: serine 307, serine 309, and serine 531.

It belongs to the MIEAP family. As to quaternary structure, interacts (via coiled-coil domains) with BNIP3L (via BH3 domain). Interacts (via coiled-coil domains) with BNIP3 (via BH3 domain). Interacts with YWHAG/14-3-3 protein gamma; a protein that also plays a role in MALM.

The protein resides in the cytoplasm. It is found in the cytosol. It localises to the mitochondrion outer membrane. The protein localises to the mitochondrion matrix. In terms of biological role, key regulator of mitochondrial quality that mediates the repairing or degradation of unhealthy mitochondria in response to mitochondrial damage. Mediator of mitochondrial protein catabolic process (also named MALM) by mediating the degradation of damaged proteins inside mitochondria by promoting the accumulation in the mitochondrial matrix of hydrolases that are characteristic of the lysosomal lumen. Also involved in mitochondrion degradation of damaged mitochondria by promoting the formation of vacuole-like structures (named MIV), which engulf and degrade unhealthy mitochondria by accumulating lysosomes. The physical interaction of SPATA18/MIEAP, BNIP3 and BNIP3L/NIX at the mitochondrial outer membrane regulates the opening of a pore in the mitochondrial double membrane in order to mediate the translocation of lysosomal proteins from the cytoplasm to the mitochondrial matrix. Binds cardiolipin. May form molecular condensates (non-membrane-bounded organelles) within mitochondria that compartmentalize and promote cardiolipin metabolism. The polypeptide is Mitochondria-eating protein (SPATA18) (Sus scrofa (Pig)).